A 315-amino-acid polypeptide reads, in one-letter code: Fe(3+)-citrate-binding protein YfmC (315 aa).

An N-terminal signal peptide occupies residues 1-18; sequence MRTYSNKLIAIMSVLLLA. Residue Cys19 is the site of N-palmitoyl cysteine attachment. A lipid anchor (S-diacylglycerol cysteine) is attached at Cys19. Positions 27–36 are enriched in low complexity; it reads SSQNNNGSGK. Positions 27–52 are disordered; the sequence is SSQNNNGSGKSESKDSRVIHDEEGKT. The span at 37-51 shows a compositional bias: basic and acidic residues; that stretch reads SESKDSRVIHDEEGK. The Fe/B12 periplasmic-binding domain occupies 60–315; the sequence is RVVVLELSFL…KDVLKKVYNK (256 aa).

It belongs to the bacterial solute-binding protein 8 family. The complex is composed of one ATP-binding protein (YfmF), two transmembrane proteins (YfmD and YfmE) and a solute-binding protein (YfmC).

It is found in the cell membrane. Functionally, part of the ABC transporter complex YfmCDEF involved in citrate-dependent Fe(3+) import. Binds citrate-dependent Fe(3+) and delivers it to the surface of YfmDE. The sequence is that of Fe(3+)-citrate-binding protein YfmC (yfmC) from Bacillus subtilis (strain 168).